The following is a 250-amino-acid chain: UPF0736 protein BPUM_1067 (250 aa).

It belongs to the UPF0736 family.

This Bacillus pumilus (strain SAFR-032) protein is UPF0736 protein BPUM_1067.